Here is a 278-residue protein sequence, read N- to C-terminus: Small ribosomal subunit protein uS2 (278 aa).

The tract at residues 235–278 (QRRKDHGEGGQQAAGGGRGQRDEINVYQGGRGGRGGGPRQQQAS) is disordered. 2 stretches are compositionally biased toward gly residues: residues 243 to 252 (GGQQAAGGGR) and 263 to 272 (GGRGGRGGGP).

The protein belongs to the universal ribosomal protein uS2 family.

The chain is Small ribosomal subunit protein uS2 from Sorangium cellulosum (strain So ce56) (Polyangium cellulosum (strain So ce56)).